The chain runs to 277 residues: Phosphonoacetaldehyde hydrolase (277 aa).

The active-site Nucleophile is D20. Positions 20 and 22 each coordinate Mg(2+). The Schiff-base intermediate with substrate role is filled by K61. Position 194 (D194) interacts with Mg(2+).

This sequence belongs to the HAD-like hydrolase superfamily. PhnX family. In terms of assembly, homodimer. Requires Mg(2+) as cofactor.

It carries out the reaction phosphonoacetaldehyde + H2O = acetaldehyde + phosphate + H(+). Functionally, involved in phosphonate degradation. The protein is Phosphonoacetaldehyde hydrolase of Syntrophobacter fumaroxidans (strain DSM 10017 / MPOB).